The primary structure comprises 1312 residues: Probable histone-lysine N-methyltransferase lin-59 (1312 aa).

2 stretches are compositionally biased toward polar residues: residues 1–11 (MHGAGEQQQRY) and 25–36 (STSSHQYQQQGA). Disordered stretches follow at residues 1-41 (MHGA…QMHQ), 54-81 (TTTS…RQQG), 154-223 (QPSG…KPVD), 312-435 (EESK…PPPV), and 524-556 (KDNI…EPSE). Residues 54-68 (TTTSAAASTSSSGGS) are compositionally biased toward low complexity. Positions 69 to 78 (NSSGGSGGHR) are enriched in gly residues. Residues 160–176 (PMSSNAPATTSSATPDS) show a composition bias toward low complexity. Acidic residues predominate over residues 200-210 (DHDDEEDDDGP). The span at 312-321 (EESKKKKDME) shows a compositional bias: basic and acidic residues. The span at 344–367 (ATRSTNSPDVTTSNLPEEPSTSTM) shows a compositional bias: polar residues. Positions 371–382 (KENEDVEKVEGK) are enriched in basic and acidic residues. Basic residues predominate over residues 383–394 (RRGRKPKKRRGF). Basic and acidic residues-rich tracts occupy residues 395–419 (HKES…DHLP) and 524–535 (KDNIKKEVKEES). The AWS domain maps to 590 to 635 (APSLTCGCTKGACTSDMDCLNRALRVQCSSDCSVPYCSNRRFWKED). The 113-residue stretch at 638–750 (NKLCVSNGPR…PNAEITVDKS (113 aa)) folds into the SET domain. The segment at 913–934 (DNAPRARALSTSCPSPVPSKRG) is disordered. A PHD-type zinc finger spans residues 967-1027 (AVRCICGALD…EYICDFCTNK (61 aa)). A BAH domain is found at 1100-1223 (NKYRFPKAAT…KTQRVFEKVP (124 aa)). The disordered stretch occupies residues 1248–1295 (RDFRPYDPSNPSPKPPKTSSIPSTSSIDPPQSSSDGLPEVDTKKLSKR). Residues 1264–1281 (KTSSIPSTSSIDPPQSSS) are compositionally biased toward low complexity.

The protein belongs to the class V-like SAM-binding methyltransferase superfamily. Histone-lysine methyltransferase family. SET2 subfamily. As to expression, widely expressed throughout embryonic development and into adulthood.

Its subcellular location is the nucleus. The enzyme catalyses L-lysyl-[histone] + S-adenosyl-L-methionine = N(6)-methyl-L-lysyl-[histone] + S-adenosyl-L-homocysteine + H(+). In terms of biological role, probable histone methyltransferase. Essential protein required to maintain expression of homeotic genes egl-5 and mab-5. May play an analogous role to the trithorax Group (trxG) proteins. TrxG proteins form multiprotein complexes that are required to maintain the transcriptionally active state of homeotic genes throughout development. May act via a modification of chromatin. This chain is Probable histone-lysine N-methyltransferase lin-59 (lin-59), found in Caenorhabditis elegans.